The sequence spans 334 residues: ADP-L-glycero-D-manno-heptose-6-epimerase (334 aa).

NADP(+)-binding positions include 11–12 (FI), 32–33 (DN), Lys-39, Lys-54, 77–81 (QGACS), and Asn-94. Residue Tyr-141 is the Proton acceptor of the active site. Lys-145 contacts NADP(+). Position 171 (Asn-171) interacts with substrate. Residues Val-172 and Lys-180 each contribute to the NADP(+) site. Lys-180 acts as the Proton acceptor in catalysis. Substrate-binding positions include Arg-182, His-189, 203–206 (FGSN), Arg-216, and Tyr-295.

Belongs to the NAD(P)-dependent epimerase/dehydratase family. HldD subfamily. In terms of assembly, homopentamer. NADP(+) serves as cofactor.

The enzyme catalyses ADP-D-glycero-beta-D-manno-heptose = ADP-L-glycero-beta-D-manno-heptose. It functions in the pathway nucleotide-sugar biosynthesis; ADP-L-glycero-beta-D-manno-heptose biosynthesis; ADP-L-glycero-beta-D-manno-heptose from D-glycero-beta-D-manno-heptose 7-phosphate: step 4/4. Functionally, catalyzes the interconversion between ADP-D-glycero-beta-D-manno-heptose and ADP-L-glycero-beta-D-manno-heptose via an epimerization at carbon 6 of the heptose. This chain is ADP-L-glycero-D-manno-heptose-6-epimerase, found in Neisseria meningitidis serogroup C (strain 053442).